The chain runs to 395 residues: S-adenosylmethionine synthase (395 aa).

His16 contributes to the ATP binding site. Asp18 serves as a coordination point for Mg(2+). Glu44 is a K(+) binding site. Residues Glu57 and Gln100 each coordinate L-methionine. Positions Gln100 to Arg110 are flexible loop. Residues Asp167–Lys169, Arg233–Phe234, Asp242, Arg248–Lys249, Ala265, and Lys269 contribute to the ATP site. Asp242 is an L-methionine binding site. Lys273 is an L-methionine binding site.

Belongs to the AdoMet synthase family. As to quaternary structure, homotetramer; dimer of dimers. It depends on Mg(2+) as a cofactor. Requires K(+) as cofactor.

Its subcellular location is the cytoplasm. It carries out the reaction L-methionine + ATP + H2O = S-adenosyl-L-methionine + phosphate + diphosphate. It participates in amino-acid biosynthesis; S-adenosyl-L-methionine biosynthesis; S-adenosyl-L-methionine from L-methionine: step 1/1. Its function is as follows. Catalyzes the formation of S-adenosylmethionine (AdoMet) from methionine and ATP. The overall synthetic reaction is composed of two sequential steps, AdoMet formation and the subsequent tripolyphosphate hydrolysis which occurs prior to release of AdoMet from the enzyme. In Paraburkholderia phymatum (strain DSM 17167 / CIP 108236 / LMG 21445 / STM815) (Burkholderia phymatum), this protein is S-adenosylmethionine synthase.